Reading from the N-terminus, the 430-residue chain is Neuropeptide FF receptor 1 (430 aa).

Residues 1–20 are disordered; that stretch reads MEGEPSQPPNSSWPLSQNGT. The Extracellular portion of the chain corresponds to 1–43; that stretch reads MEGEPSQPPNSSWPLSQNGTNTEATPATNLTFSSYYQHTSPVA. The span at 9–20 shows a compositional bias: polar residues; that stretch reads PNSSWPLSQNGT. N-linked (GlcNAc...) asparagine glycosylation is found at asparagine 10, asparagine 18, and asparagine 29. Residues 44–64 traverse the membrane as a helical segment; the sequence is AMFIVAYALIFLLCMVGNTLV. At 65-80 the chain is on the cytoplasmic side; it reads CFIVLKNRHMHTVTNM. Residues 81-101 form a helical membrane-spanning segment; sequence FILNLAVSDLLVGIFCMPTTL. The Extracellular portion of the chain corresponds to 102 to 117; it reads VDNLITGWPFDNATCK. Asparagine 113 carries N-linked (GlcNAc...) asparagine glycosylation. Cysteine 116 and cysteine 203 form a disulfide bridge. The helical transmembrane segment at 118-138 threads the bilayer; the sequence is MSGLVQGMSVSASVFTLVAIA. Over 139 to 158 the chain is Cytoplasmic; the sequence is VERFRCIVHPFREKLTLRKA. A helical transmembrane segment spans residues 159 to 179; the sequence is LVTIAVIWALALLIMCPSAVT. Over 180–214 the chain is Extracellular; that stretch reads LTVTREEHHFMVDARNRSYPLYSCWEAWPEKGMRR. Asparagine 195 carries an N-linked (GlcNAc...) asparagine glycan. A helical transmembrane segment spans residues 215 to 235; it reads VYTTVLFSHIYLAPLALIVVM. At 236–271 the chain is on the cytoplasmic side; that stretch reads YARIARKLCQAPGPAPGGEEAADPRASRRRARVVHM. Residues 272-292 traverse the membrane as a helical segment; that stretch reads LVMVALFFTLSWLPLWALLLL. Topologically, residues 293–307 are extracellular; it reads IDYGQLSAPQLHLVT. Residues 308–328 form a helical membrane-spanning segment; the sequence is VYAFPFAHWLAFFNSSANPII. The Cytoplasmic portion of the chain corresponds to 329 to 430; that stretch reads YGYFNENFRR…LPLTIPAWDI (102 aa). The segment covering 379–404 has biased composition (low complexity); sequence SDSGLPSESGPSSGAPRPGRLPLRNG. A disordered region spans residues 379–413; that stretch reads SDSGLPSESGPSSGAPRPGRLPLRNGRVAHHGLPR.

This sequence belongs to the G-protein coupled receptor 1 family.

The protein localises to the cell membrane. Functionally, receptor for NPAF (A-18-F-amide) and NPFF (F-8-F-amide) neuropeptides, also known as morphine-modulating peptides. Can also be activated by a variety of naturally occurring or synthetic FMRF-amide like ligands. This receptor mediates its action by association with G proteins that activate a phosphatidylinositol-calcium second messenger system. In Homo sapiens (Human), this protein is Neuropeptide FF receptor 1.